Consider the following 428-residue polypeptide: Trigger factor (428 aa).

The region spanning 163 to 248 (GNIAVIDFKG…VKEIKVKELP (86 aa)) is the PPIase FKBP-type domain.

Belongs to the FKBP-type PPIase family. Tig subfamily.

It is found in the cytoplasm. It catalyses the reaction [protein]-peptidylproline (omega=180) = [protein]-peptidylproline (omega=0). Its function is as follows. Involved in protein export. Acts as a chaperone by maintaining the newly synthesized protein in an open conformation. Functions as a peptidyl-prolyl cis-trans isomerase. The sequence is that of Trigger factor from Clostridium perfringens (strain ATCC 13124 / DSM 756 / JCM 1290 / NCIMB 6125 / NCTC 8237 / Type A).